A 598-amino-acid polypeptide reads, in one-letter code: MIEGSGSKTPKRNSDEISVKSLSIHEANTLSSEHEHESGNEELTLSQIVIRSDFANESSERQSKIILDRFNQGIGKNSAFTDSPALGRGLSRVDVSYFVMGHRNQVAELYDPRGQRFSTVLTPDPTVNIKYVGPVSKTAHYFGAYGKHVLNVPAGHYAKAFSKNRPVLYGEGPHVIIDPTFQFDENNGFVNQQEPFIEHSTINILRIPAGKIAKVWIGTQPHILESRRDPYVFVDAQFKLVSPDGAKKAQLFESSSCTFVEHGSIKRIIPHTGEVAITYNNGILTIIPTPKDGKPVIIDSPTHNFEGFISTSLQTCLFPSKETKQQALADNKSALADEINLKIFQTRDSLRVGVVLVVAFKIVDPELAITKLGKEGIINHIENVSFADMGKAIQLSTLQEIMYFNSIKPGQATNDDSVQTIQDRVKSHLARDLFDYGVELSRLQIETMKVLDTEIAKKLAGQSVTSAEFTTKQATLVKEYDIKTTEARLKAETDNIALEQRNKAIISESQAKLSSAQREAESLLITAEAQKKASELQGELYTKYPILAEIELARIKAEALKNATLYITPQDAGAFMNSPLVYFDKMMNANNTIQQKKN.

Residues 482–539 (IKTTEARLKAETDNIALEQRNKAIISESQAKLSSAQREAESLLITAEAQKKASELQGE) are a coiled coil.

The protein belongs to the vacuolin family.

It localises to the endosome membrane. The protein localises to the lysosome. The protein is Vacuolin-A (vacA) of Dictyostelium discoideum (Social amoeba).